A 137-amino-acid polypeptide reads, in one-letter code: Small ribosomal subunit protein bS16 (137 aa).

Belongs to the bacterial ribosomal protein bS16 family.

This Leuconostoc citreum (strain KM20) protein is Small ribosomal subunit protein bS16.